Reading from the N-terminus, the 127-residue chain is Aspartate 1-decarboxylase (127 aa).

Serine 25 serves as the catalytic Schiff-base intermediate with substrate; via pyruvic acid. Serine 25 is modified (pyruvic acid (Ser)). Threonine 57 contacts substrate. The active-site Proton donor is the tyrosine 58. Position 73–75 (73–75 (GAA)) interacts with substrate.

This sequence belongs to the PanD family. As to quaternary structure, heterooctamer of four alpha and four beta subunits. Requires pyruvate as cofactor. Post-translationally, is synthesized initially as an inactive proenzyme, which is activated by self-cleavage at a specific serine bond to produce a beta-subunit with a hydroxyl group at its C-terminus and an alpha-subunit with a pyruvoyl group at its N-terminus.

It localises to the cytoplasm. The catalysed reaction is L-aspartate + H(+) = beta-alanine + CO2. Its pathway is cofactor biosynthesis; (R)-pantothenate biosynthesis; beta-alanine from L-aspartate: step 1/1. In terms of biological role, catalyzes the pyruvoyl-dependent decarboxylation of aspartate to produce beta-alanine. This is Aspartate 1-decarboxylase from Clostridium botulinum (strain Okra / Type B1).